We begin with the raw amino-acid sequence, 1100 residues long: Regulator of nonsense transcripts 1 (1100 aa).

Residues 42–53 (SQTQTQGQTQSQ) are compositionally biased toward low complexity. Residues 42-67 (SQTQTQGQTQSQLDNQVNGPDGVLPN) form a disordered region. The region spanning 94–251 (TKDLPVHACS…NKLEELWKEN (158 aa)) is the Upf1 CH-rich domain. Positions 102, 105, 116, 119, 124, 134, 138, 144, 162, 165, 188, and 192 each coordinate Zn(2+). The segment at 102–134 (CSYCGIHDPACVVYCNTSKKWFCNGRGNTSGSH) is C3H. The CC/SHH/C stretch occupies residues 116-144 (CNTSKKWFCNGRGNTSGSHIVNHLVRAKC). The C4 stretch occupies residues 162-192 (CYNCGCRNVFLLGFIPAKADSVVVLLCRQPC). Residues Gln455, 475–479 (GTGKT), Gln645, Tyr682, and Glu813 contribute to the ATP site. The disordered stretch occupies residues 978–1065 (LGQVNGPAAG…QPELSQDSYL (88 aa)). The segment covering 982–993 (NGPAAGRGAPKG) has biased composition (low complexity). The span at 1012–1063 (SGQPNMPNSQASQDLVSQPFSQGPLTQGYITMSQPSQMSQPGLSQPELSQDS) shows a compositional bias: polar residues.

Belongs to the DNA2/NAM7 helicase family.

The protein localises to the cytoplasm. Its subcellular location is the P-body. It is found in the nucleus. The protein resides in the perinuclear region. Its function is as follows. RNA-dependent helicase and ATPase required for nonsense-mediated decay (NMD) of mRNAs containing premature stop codons. Is recruited to mRNAs upon translation termination and undergoes a cycle of phosphorylation and dephosphorylation; its phosphorylation appears to be a key step in NMD. The formation of an upf1-upf2-upf3 surveillance complex is believed to activate NMD. The sequence is that of Regulator of nonsense transcripts 1 from Danio rerio (Zebrafish).